The following is a 220-amino-acid chain: Large ribosomal subunit protein uL16z (220 aa).

Belongs to the universal ribosomal protein uL16 family. As to quaternary structure, component of the small ribosomal subunit. Mature ribosomes consist of a small (40S) and a large (60S) subunit. The 40S subunit contains about 33 different proteins and 1 molecule of RNA (18S). The 60S subunit contains about 49 different proteins and 3 molecules of RNA (25S, 5.8S and 5S). Interacts with NIK1. Interacts with LIMYB. In terms of processing, phosphorylated by NIK1 and NIK2 in vitro. In terms of tissue distribution, ubiquitous, with the highest expression in flowers. Expressed in seedlings, leaves, roots, stems and flowers. Expressed in young leaves, mostly in dividing cells and in the hydathodes, in the root tips and lateral root primordia, in pistils, anthers, and pollen grains, and in developing seeds.

The protein resides in the cytoplasm. It localises to the nucleus. Ribosomal protein involved in translational regulation. Contribute to general translation under UV-B stress. Involved in the NIK1-mediated defense response to geminivirus infection. Acts coordinately with LIMYB as a transcriptional repressor. This is Large ribosomal subunit protein uL16z from Arabidopsis thaliana (Mouse-ear cress).